A 354-amino-acid chain; its full sequence is MAETDKQKALSAALSQIEKQFGKGSIMRMNETQVNDNLQVISTGSLGLDMALGVGGLPRGRVVEIYGPESSGKTTLCLQVVAEAQKLGGTCAYIDAENALDPVYAGKLGVKVDDLLVSQPDTGEQALEICDMLVRSGGVDVIVVDSVAALVPKAEIEGEMGDSHVGLQARLMSQALRKLTGNIKRTNTLVIFINQIRMKIGVMFGNPETTTGGNALKFYASVRLDIRRIGAIKKTDEIIGNETRVKVVKNKVSPPFKQAEFDILYGEGISREGEIIEMGVANKFVDKSGAWYAYNGQKIGQGKDNAREWLRENPAIAQEIEKKIRTAAGVGGMNEFVPSSEEQAEASLSEDHDQ.

Residue glycine 67–threonine 74 coordinates ATP. A disordered region spans residues methionine 333 to glutamine 354.

This sequence belongs to the RecA family.

Its subcellular location is the cytoplasm. Can catalyze the hydrolysis of ATP in the presence of single-stranded DNA, the ATP-dependent uptake of single-stranded DNA by duplex DNA, and the ATP-dependent hybridization of homologous single-stranded DNAs. It interacts with LexA causing its activation and leading to its autocatalytic cleavage. This is Protein RecA from Laribacter hongkongensis (strain HLHK9).